A 236-amino-acid chain; its full sequence is V-set and transmembrane domain-containing protein 1 (236 aa).

Residues 1–16 (MTAEFLSLLCLGLCLG) form the signal peptide. Over 17 to 135 (YEDEKKNEKP…APSMKTDTRT (119 aa)) the chain is Extracellular. The 88-residue stretch at 27-114 (PKPSLHAWPS…EWSESSEHLQ (88 aa)) folds into the Ig-like V-type domain. N-linked (GlcNAc...) asparagine glycans are attached at residues asparagine 44 and asparagine 55. Residues cysteine 49 and cysteine 96 are joined by a disulfide bond. A helical transmembrane segment spans residues 136-156 (IFVAIFSCISILLLFLSVFII). The Cytoplasmic portion of the chain corresponds to 157–236 (YRCSQHSSSS…GSHEYAALKV (80 aa)). A disordered region spans residues 166–200 (SEESTKRTSHSKLPEQEAAEADLSNMERVSLSTAD). 2 short sequence motifs (ITIM motif) span residues 204–209 (VTYAEL) and 229–234 (HEYAAL). The segment at 215-236 (SEAASDTTQEPPGSHEYAALKV) is disordered.

In terms of processing, isoform 2 is N-glycosylated. Expressed on myeloid (neutrophils, eosinophils and monocytes) but not on lymphoid cells.

The protein localises to the membrane. It localises to the secreted. Its function is as follows. Behaves as a cytokine, promoting IL17A secretion by CD4+ T-cells, and differentiation and activation of IL17 producing helper T-cells (TH17). In terms of biological role, inhibitory immune receptor involved in the regulation of phagocytes. This is V-set and transmembrane domain-containing protein 1 (VSTM1) from Homo sapiens (Human).